Consider the following 567-residue polypeptide: Dihydroxy-acid dehydratase 3 (567 aa).

Cysteine 57 serves as a coordination point for [2Fe-2S] cluster. Position 89 (aspartate 89) interacts with Mg(2+). [2Fe-2S] cluster is bound at residue cysteine 130. The Mg(2+) site is built by aspartate 131 and lysine 132. The residue at position 132 (lysine 132) is an N6-carboxylysine. Cysteine 202 lines the [2Fe-2S] cluster pocket. Glutamate 454 serves as a coordination point for Mg(2+). Residue serine 480 is the Proton acceptor of the active site.

It belongs to the IlvD/Edd family. As to quaternary structure, homodimer. [2Fe-2S] cluster is required as a cofactor. It depends on Mg(2+) as a cofactor.

It catalyses the reaction (2R)-2,3-dihydroxy-3-methylbutanoate = 3-methyl-2-oxobutanoate + H2O. The catalysed reaction is (2R,3R)-2,3-dihydroxy-3-methylpentanoate = (S)-3-methyl-2-oxopentanoate + H2O. It participates in amino-acid biosynthesis; L-isoleucine biosynthesis; L-isoleucine from 2-oxobutanoate: step 3/4. It functions in the pathway amino-acid biosynthesis; L-valine biosynthesis; L-valine from pyruvate: step 3/4. In terms of biological role, functions in the biosynthesis of branched-chain amino acids. Catalyzes the dehydration of (2R,3R)-2,3-dihydroxy-3-methylpentanoate (2,3-dihydroxy-3-methylvalerate) into 2-oxo-3-methylpentanoate (2-oxo-3-methylvalerate) and of (2R)-2,3-dihydroxy-3-methylbutanoate (2,3-dihydroxyisovalerate) into 2-oxo-3-methylbutanoate (2-oxoisovalerate), the penultimate precursor to L-isoleucine and L-valine, respectively. The protein is Dihydroxy-acid dehydratase 3 of Aromatoleum aromaticum (strain DSM 19018 / LMG 30748 / EbN1) (Azoarcus sp. (strain EbN1)).